Reading from the N-terminus, the 196-residue chain is Ribosome-binding factor A (196 aa).

It belongs to the RbfA family. As to quaternary structure, monomer. Binds 30S ribosomal subunits, but not 50S ribosomal subunits or 70S ribosomes.

It localises to the cytoplasm. Functionally, one of several proteins that assist in the late maturation steps of the functional core of the 30S ribosomal subunit. Associates with free 30S ribosomal subunits (but not with 30S subunits that are part of 70S ribosomes or polysomes). Required for efficient processing of 16S rRNA. May interact with the 5'-terminal helix region of 16S rRNA. The protein is Ribosome-binding factor A of Tropheryma whipplei (strain TW08/27) (Whipple's bacillus).